The following is a 457-amino-acid chain: Siroheme synthase (457 aa).

The precorrin-2 dehydrogenase /sirohydrochlorin ferrochelatase stretch occupies residues 1 to 204 (MDHLPIFCQL…QDQQAVEETT (204 aa)). Residues 22-23 (DV) and 43-44 (LA) each bind NAD(+). Ser128 is subject to Phosphoserine. Residues 216 to 457 (GEVVLVGAGP…REKLNWFSNH (242 aa)) form a uroporphyrinogen-III C-methyltransferase region. Pro225 contacts S-adenosyl-L-methionine. Asp248 functions as the Proton acceptor in the catalytic mechanism. The active-site Proton donor is the Lys270. S-adenosyl-L-methionine contacts are provided by residues 301-303 (GGD), Ile306, 331-332 (TA), Met382, and Gly411.

The protein in the N-terminal section; belongs to the precorrin-2 dehydrogenase / sirohydrochlorin ferrochelatase family. This sequence in the C-terminal section; belongs to the precorrin methyltransferase family.

The catalysed reaction is uroporphyrinogen III + 2 S-adenosyl-L-methionine = precorrin-2 + 2 S-adenosyl-L-homocysteine + H(+). The enzyme catalyses precorrin-2 + NAD(+) = sirohydrochlorin + NADH + 2 H(+). It carries out the reaction siroheme + 2 H(+) = sirohydrochlorin + Fe(2+). The protein operates within cofactor biosynthesis; adenosylcobalamin biosynthesis; precorrin-2 from uroporphyrinogen III: step 1/1. Its pathway is cofactor biosynthesis; adenosylcobalamin biosynthesis; sirohydrochlorin from precorrin-2: step 1/1. It participates in porphyrin-containing compound metabolism; siroheme biosynthesis; precorrin-2 from uroporphyrinogen III: step 1/1. It functions in the pathway porphyrin-containing compound metabolism; siroheme biosynthesis; siroheme from sirohydrochlorin: step 1/1. The protein operates within porphyrin-containing compound metabolism; siroheme biosynthesis; sirohydrochlorin from precorrin-2: step 1/1. In terms of biological role, multifunctional enzyme that catalyzes the SAM-dependent methylations of uroporphyrinogen III at position C-2 and C-7 to form precorrin-2 via precorrin-1. Then it catalyzes the NAD-dependent ring dehydrogenation of precorrin-2 to yield sirohydrochlorin. Finally, it catalyzes the ferrochelation of sirohydrochlorin to yield siroheme. This Enterobacter sp. (strain 638) protein is Siroheme synthase.